A 326-amino-acid polypeptide reads, in one-letter code: MKGNPSTHEVIGTMSTRRFYRWLITIDGDTEINYRNYEELPSRSNYIFFFGGRLRAVKTARPFSLVVLFLILSPMVLFSVFEAHRLWHTRYGYKALVVLFYYAWAWSLLSFTKTATSDPGVLPRNIHMHKDTPQEYFNNVTLPYGAGGSAGNASVTLKYCHTCKIWRPPRASHCSVCECCVLTHDHHCIWVNNCVGQRNYRYFLAFLLSSTLACALLIANCALHLHRALHEGIRVSHRPLPVAVLLCVYAAVLCVYPVILLGYHVAMSGTQQTTREYLRSIGFRNPVMHRIRRRRDNPYAEHGFLRNMLDLMAEPRGPRSCNYRYR.

Residues 1–62 (MKGNPSTHEV…RLRAVKTARP (62 aa)) lie on the Cytoplasmic side of the membrane. The helical transmembrane segment at 63-83 (FSLVVLFLILSPMVLFSVFEA) threads the bilayer. Residues 84–90 (HRLWHTR) are Lumenal-facing. The chain crosses the membrane as a helical span at residues 91-111 (YGYKALVVLFYYAWAWSLLSF). The Cytoplasmic segment spans residues 112–202 (TKTATSDPGV…NCVGQRNYRY (91 aa)). The region spanning 158-208 (KYCHTCKIWRPPRASHCSVCECCVLTHDHHCIWVNNCVGQRNYRYFLAFLL) is the DHHC domain. Cysteine 188 serves as the catalytic S-palmitoyl cysteine intermediate. Residues 203–223 (FLAFLLSSTLACALLIANCAL) form a helical membrane-spanning segment. The Lumenal segment spans residues 224–241 (HLHRALHEGIRVSHRPLP). A helical transmembrane segment spans residues 242–262 (VAVLLCVYAAVLCVYPVILLG). At 263-326 (YHVAMSGTQQ…GPRSCNYRYR (64 aa)) the chain is on the cytoplasmic side.

This sequence belongs to the DHHC palmitoyltransferase family. ERF2/ZDHHC9 subfamily. In terms of assembly, interacts with ERF4. Autopalmitoylated.

The protein resides in the endoplasmic reticulum membrane. It catalyses the reaction L-cysteinyl-[protein] + hexadecanoyl-CoA = S-hexadecanoyl-L-cysteinyl-[protein] + CoA. The ERF2-ERF4 complex is a palmitoyltransferase specific for Ras proteins. This Candida glabrata (strain ATCC 2001 / BCRC 20586 / JCM 3761 / NBRC 0622 / NRRL Y-65 / CBS 138) (Yeast) protein is Palmitoyltransferase ERF2 (ERF2).